Reading from the N-terminus, the 237-residue chain is Dihydroceramide fatty acyl 2-hydroxylase FAH1 (237 aa).

The next 2 membrane-spanning stretches (helical) occupy residues 50-70 and 80-100; these read LTLTVWWAVPVIWLPVVVWCI and LPEIVPIVVMGIFIWTFFEYV. Zn(2+)-binding residues include histidine 102, histidine 107, histidine 123, histidine 126, and histidine 127. A run of 2 helical transmembrane segments spans residues 137–157 and 164–184; these read VFPPTATAILCFPFWNIAKAI and PALFGGGMLGYVMYDVTHYYL. Residues histidine 181, histidine 185, histidine 201, histidine 204, and histidine 205 each coordinate Zn(2+).

It belongs to the sterol desaturase family. Interacts with CYTB5-A, CYTB5-B, CYTB5-C and CYTB5-D. Interacts indirectly with BI-1 via CYTB5-D. The cofactor is Zn(2+). As to expression, expressed in leaves, roots, flowers and seeds.

The protein resides in the endoplasmic reticulum membrane. The enzyme catalyses an N-(1,2-saturated acyl)sphinganine + 2 Fe(II)-[cytochrome b5] + O2 + 2 H(+) = an N-[(2'R)-hydroxyacyl]sphinganine + 2 Fe(III)-[cytochrome b5] + H2O. In terms of biological role, fatty acid 2-hydroxylase involved in the alpha-hydroxylation of sphingolipid-associated very long-chain fatty acids (VLCFA). Probably involved in the resistance response to oxidative stress. The polypeptide is Dihydroceramide fatty acyl 2-hydroxylase FAH1 (Arabidopsis thaliana (Mouse-ear cress)).